Reading from the N-terminus, the 491-residue chain is Glutamyl-tRNA(Gln) amidotransferase subunit A (491 aa).

Catalysis depends on charge relay system residues Lys-80 and Ser-155. The active-site Acyl-ester intermediate is the Ser-179.

The protein belongs to the amidase family. GatA subfamily. Heterotrimer of A, B and C subunits.

It catalyses the reaction L-glutamyl-tRNA(Gln) + L-glutamine + ATP + H2O = L-glutaminyl-tRNA(Gln) + L-glutamate + ADP + phosphate + H(+). Its function is as follows. Allows the formation of correctly charged Gln-tRNA(Gln) through the transamidation of misacylated Glu-tRNA(Gln) in organisms which lack glutaminyl-tRNA synthetase. The reaction takes place in the presence of glutamine and ATP through an activated gamma-phospho-Glu-tRNA(Gln). The protein is Glutamyl-tRNA(Gln) amidotransferase subunit A of Salinispora tropica (strain ATCC BAA-916 / DSM 44818 / JCM 13857 / NBRC 105044 / CNB-440).